The chain runs to 140 residues: Chromatin accessibility complex 16kD protein (140 aa).

The segment at 111 to 140 (LNRSAGSDDDDDDDDDDDEEESESESESDE) is disordered. Residues 117–140 (SDDDDDDDDDDDEEESESESESDE) are compositionally biased toward acidic residues.

In terms of assembly, component of the chromatin accessibility complex (CHRAC), composed of Chrac-14, Chrac-16, Acf and Iswi. Forms a heterodimer with Chrac-14. The Chrac-14/Chrac-16 heterodimer interacts with Acf (via N-terminus). Stabilizes the interaction between Chrac-14 and Iswi.

Its subcellular location is the nucleus. Histone-like protein which promotes nucleosome sliding of ATP-dependent nucleosome remodeling complexes. Part of the chromatin-accessibility complex (CHRAC) which uses energy/ATP to increase the general accessibility of DNA in chromatin. As a heterodimer with Chrac-14, binds DNA and facilitates nucleosome sliding by Acf. As part of the CHRAC complex, required for oogenesis. In Drosophila melanogaster (Fruit fly), this protein is Chromatin accessibility complex 16kD protein.